Consider the following 74-residue polypeptide: U4-theraphotoxin-Cg1a (74 aa).

Residues 1-19 (MNATIFALLLLLNLAMYNA) form the signal peptide. Residues 20-39 (AEQSSETDMDDTLLIPEINR) constitute a propeptide that is removed on maturation. 3 disulfide bridges follow: C42-C56, C49-C61, and C55-C71.

It belongs to the neurotoxin 36 family. 01 subfamily. In terms of tissue distribution, expressed by the venom gland.

It is found in the secreted. Probable ion channel inhibitor. In Chilobrachys guangxiensis (Chinese earth tiger tarantula), this protein is U4-theraphotoxin-Cg1a.